A 312-amino-acid polypeptide reads, in one-letter code: Deoxyribonuclease Tat-D (312 aa).

A divalent metal cation is bound by residues Glu-124, His-161, His-187, and Asp-235.

The protein belongs to the metallo-dependent hydrolases superfamily. TatD-type hydrolase family. The cofactor is a divalent metal cation.

It is found in the cytoplasm. It localises to the nucleus. Has both endo- and exonuclease activities. Incises double-stranded DNA without obvious specificity via its endonuclease activity and excises the DNA from the 3'-to 5'-end by its exonuclease activity. May have a role in apoptosis. The sequence is that of Deoxyribonuclease Tat-D from Schizosaccharomyces pombe (strain 972 / ATCC 24843) (Fission yeast).